Here is a 92-residue protein sequence, read N- to C-terminus: MAKGQSLQDPFLNALRRERVPVSIYLVNGIKLQGQVESFDQFVILLKNTVSQMVYKHAISTVVPSRPFNVSNHQATNAQAGFNAQHDDGDDK.

The Sm domain occupies D9–F68.

It belongs to the Hfq family. In terms of assembly, homohexamer.

Functionally, RNA chaperone that binds small regulatory RNA (sRNAs) and mRNAs to facilitate mRNA translational regulation in response to envelope stress, environmental stress and changes in metabolite concentrations. Also binds with high specificity to tRNAs. The sequence is that of RNA-binding protein Hfq from Shewanella halifaxensis (strain HAW-EB4).